Reading from the N-terminus, the 307-residue chain is Ventral anterior homeobox 2 (307 aa).

Disordered regions lie at residues 1–70 (MFDQ…DKLL), 155–175 (RTKQ…STSE), and 197–254 (PPPN…PSPR). Positions 25–38 (CRDRGRESKSRTEV) are enriched in basic and acidic residues. The segment covering 46-62 (SSTDTPGTSASTPTSSS) has biased composition (low complexity). A DNA-binding region (homeobox) is located at residues 103 to 162 (PKRTRTSFTAEQLYRLELEFQRCQYVVGRERTELARQLNLSETQVKVWFQNRRTKQKKDQ). The span at 159–170 (KKDQTKDTDKRS) shows a compositional bias: basic and acidic residues. Positions 202–249 (LLAHPHPGNGSLLGSPSVSTSSGVSSSTTPPGAGSGTFGLSLSSLSGT) are enriched in low complexity.

This sequence belongs to the EMX homeobox family. In terms of tissue distribution, expressed in the anterior neural keel and later in the preoptic area, optic stalk and ventral retina.

It localises to the nucleus. Functionally, transcription factor that may function in dorsoventral specification of the forebrain. Required for closure of the choroid fissure and together with vax1 is required for optic nerve differentiation and to limit retinal development to the optic cup. The protein is Ventral anterior homeobox 2 (vax2) of Danio rerio (Zebrafish).